The following is a 199-amino-acid chain: Gamma-glutamylcyclotransferase 2-3 (199 aa).

Residue 5-10 (VFGYGS) coordinates substrate. The Proton acceptor role is filled by Glu-86.

Belongs to the gamma-glutamylcyclotransferase family. Mn(2+) serves as cofactor.

It localises to the cytoplasm. It catalyses the reaction glutathione = L-cysteinylglycine + 5-oxo-L-proline. In terms of biological role, converts GSH to 5-oxoproline and cysteine-glycine (Cys-Gly) dipeptide in vitro and plays a significant role in glutathione (GSH) homeostasis. Has no activity towards gamma-glutamyl-L-cysteine but possesses very low activity towards gamma-glutamyl-L-alanine. The polypeptide is Gamma-glutamylcyclotransferase 2-3 (Arabidopsis thaliana (Mouse-ear cress)).